The following is an 824-amino-acid chain: Type IV secretion system protein PtlC homolog (824 aa).

456-463 (GQSGSGKT) provides a ligand contact to ATP.

It belongs to the TrbE/VirB4 family.

Its subcellular location is the cell membrane. In Bordetella bronchiseptica (strain ATCC BAA-588 / NCTC 13252 / RB50) (Alcaligenes bronchisepticus), this protein is Type IV secretion system protein PtlC homolog (ptlC).